We begin with the raw amino-acid sequence, 516 residues long: L-amino acid oxidase Lm29 (516 aa).

The N-terminal stretch at 1–18 is a signal peptide; it reads MNVFFMFSLLFLAALGSC. An intrachain disulfide couples Cys28 to Cys191. FAD-binding positions include 61–62, 81–82, Arg89, and 105–108; these read MS, EA, and GPMR. Arg108 is a binding site for substrate. Asn190 carries N-linked (GlcNAc...) asparagine glycosylation. His241 lines the substrate pocket. FAD is bound at residue Val279. Cys349 and Cys430 are joined by a disulfide. The N-linked (GlcNAc...) asparagine glycan is linked to Asn379. Position 390 (Tyr390) interacts with substrate. FAD is bound by residues Glu475 and 482-487; that span reads GWIDST. Residue 482–483 coordinates substrate; that stretch reads GW.

The protein belongs to the flavin monoamine oxidase family. FIG1 subfamily. In terms of assembly, homodimer; non-covalently linked. FAD serves as cofactor. In terms of tissue distribution, expressed by the venom gland.

It localises to the secreted. The enzyme catalyses an L-alpha-amino acid + O2 + H2O = a 2-oxocarboxylate + H2O2 + NH4(+). It carries out the reaction L-leucine + O2 + H2O = 4-methyl-2-oxopentanoate + H2O2 + NH4(+). The catalysed reaction is L-phenylalanine + O2 + H2O = 3-phenylpyruvate + H2O2 + NH4(+). It catalyses the reaction L-tryptophan + O2 + H2O = indole-3-pyruvate + H2O2 + NH4(+). The enzyme catalyses L-methionine + O2 + H2O = 4-methylsulfanyl-2-oxobutanoate + H2O2 + NH4(+). It carries out the reaction L-isoleucine + O2 + H2O = (S)-3-methyl-2-oxopentanoate + H2O2 + NH4(+). The catalysed reaction is L-tyrosine + O2 + H2O = 3-(4-hydroxyphenyl)pyruvate + H2O2 + NH4(+). Its function is as follows. Catalyzes an oxidative deamination of predominantly hydrophobic and aromatic L-amino acids, thus producing hydrogen peroxide that may contribute to the diverse toxic effects of this enzyme. Is highly active on L-Met=L-Leu&gt;&gt;L-Phe&gt;L-Trp&gt;L-Tyr&gt;L-Ile, and weakly or not active on L-His, L-Arg, L-Val, L-Gln, L-Thr, L-Lys, and L-Ser. Exhibits a low myotoxicity (a mild myonecrosis is observed after injection in mice quadriceps muscle). In vitro, is cytotoxic to a lot of human cell lines, including AGS (IC(50)=22.7 ug/ml), MCF-7 (IC(50)=1.4 ug/ml), HL-60, HeLa and Jurkat cells, as well as to the parasite Leishmania brasiliensis (IC(50)=2.22 ug/ml). This cytotoxicity is dependent on the production of hydrogen peroxyde, since it is inhibited by catalase, a hydrogen peroxyde scavenger. The protein is L-amino acid oxidase Lm29 of Lachesis muta (South American bushmaster).